The primary structure comprises 228 residues: MDIERVEQVRAVERLAHRRGLALMPRAGLAAADFVAARLPAGAQVLALAGPGNNGGDVLVAATLLQARGYRVAVVMPAGPARLPDDARRAWQDWCAAGGQASADLPAHAPALVIDGLFGIGLARPLGGAWQGLIDQVNAWRVPVLALDVPSGLSAASGQPLGDPPGRPVRATWTLSFIGVPAALRAPGAAAWCGEQYLSLLGLTPAFLAEAVGPCGQATATAARRSGP.

The region spanning 9–209 is the YjeF N-terminal domain; that stretch reads VRAVERLAHR…LLGLTPAFLA (201 aa). Position 53–57 (53–57) interacts with (6S)-NADPHX; that stretch reads NNGGD. K(+) contacts are provided by asparagine 54 and aspartate 115. (6S)-NADPHX contacts are provided by residues 119 to 125 and aspartate 148; that span reads GIGLARP. A K(+)-binding site is contributed by serine 151.

It belongs to the NnrE/AIBP family. K(+) serves as cofactor.

The enzyme catalyses (6R)-NADHX = (6S)-NADHX. The catalysed reaction is (6R)-NADPHX = (6S)-NADPHX. Functionally, catalyzes the epimerization of the S- and R-forms of NAD(P)HX, a damaged form of NAD(P)H that is a result of enzymatic or heat-dependent hydration. This is a prerequisite for the S-specific NAD(P)H-hydrate dehydratase to allow the repair of both epimers of NAD(P)HX. The polypeptide is NAD(P)H-hydrate epimerase (Bordetella parapertussis (strain 12822 / ATCC BAA-587 / NCTC 13253)).